The primary structure comprises 495 residues: MRINPTTSSSAVSTLEEKNLGRIAQIIGPVLDVVFPPGKMPNIYNALVVKGRDTVGQQINVICEVQQLLGNNRVRAVAMSATDGLTRGMEVIDTGAALSVPVGGATLGRIFNVLGEPVDNLGPVDTRTTSPIHRSAPAFIQLDTKLSIFETGIKVVDLLAPYRRGGKIGLFGGAGVGKTVLIMELINNIAKAHGGVSVFGGVGERTREGNDLYMEMKESGVINEKNIAESKVALVYGQMNEPPGARMRVGLTALTMAEYFRDVNEQDVLLFIDNIFRFVQAGSEVSALLGRMPSAVGYQPTLSTEMGSLQERITSTKEGSITSIQAVYVPADDLTDPAPATTFAHLDATTVLSRGLAAKGIYPAVDPLDSTSTMLQPRIVGEEHYETAQKVKQTLQRYKELQDIIAILGLDELSEEDRLTVARARKIERFLSQPFFVAEVFTGSPGKYVGLAETIRGFQLILSGELDSLPEQAFYLVGNIDEATAKAMNLEGEKK.

172 to 179 (GGAGVGKT) contacts ATP.

The protein belongs to the ATPase alpha/beta chains family. F-type ATPases have 2 components, CF(1) - the catalytic core - and CF(0) - the membrane proton channel. CF(1) has five subunits: alpha(3), beta(3), gamma(1), delta(1), epsilon(1). CF(0) has four main subunits: a(1), b(1), b'(1) and c(9-12).

It localises to the plastid. The protein localises to the chloroplast thylakoid membrane. It carries out the reaction ATP + H2O + 4 H(+)(in) = ADP + phosphate + 5 H(+)(out). Its function is as follows. Produces ATP from ADP in the presence of a proton gradient across the membrane. The catalytic sites are hosted primarily by the beta subunits. The protein is ATP synthase subunit beta, chloroplastic of Brimeura amethystina (Spanish hyacinth).